Consider the following 517-residue polypeptide: T-box transcription factor TBX22 (517 aa).

Positions 1–83 are disordered; the sequence is MALSSRAHAF…SDESNSQESL (83 aa). Residues 35–45 show a composition bias toward acidic residues; that stretch reads LQEEQFVEEGE. Positions 46–66 are enriched in basic and acidic residues; sequence EILRSPSRDSQQPEKRLKAES. Over residues 74–83 the composition is skewed to low complexity; it reads SDESNSQESL. The T-box DNA-binding region spans 93 to 280; it reads LQGSDLWKRF…RNPFAKGFRD (188 aa). Residues 312 to 333 are disordered; that stretch reads TQSGSSGSSPVTSSGGAPSPLN. A compositionally biased stretch (low complexity) spans 314-333; sequence SGSSGSSPVTSSGGAPSPLN.

Its subcellular location is the nucleus. Its function is as follows. Probable transcriptional regulator involved in developmental processes. This is major determinant crucial to palatogenesis. The sequence is that of T-box transcription factor TBX22 (Tbx22) from Mus musculus (Mouse).